The sequence spans 176 residues: Large ribosomal subunit protein uL6 (176 aa).

This sequence belongs to the universal ribosomal protein uL6 family. Part of the 50S ribosomal subunit.

Its function is as follows. This protein binds to the 23S rRNA, and is important in its secondary structure. It is located near the subunit interface in the base of the L7/L12 stalk, and near the tRNA binding site of the peptidyltransferase center. The chain is Large ribosomal subunit protein uL6 from Burkholderia vietnamiensis (strain G4 / LMG 22486) (Burkholderia cepacia (strain R1808)).